A 256-amino-acid chain; its full sequence is Large ribosomal subunit protein eL8A (256 aa).

Residues Met-1 to Gly-37 form a disordered region. Positions Ser-16–Lys-32 are enriched in polar residues.

Belongs to the eukaryotic ribosomal protein eL8 family. As to quaternary structure, component of the large ribosomal subunit (LSU). Mature yeast ribosomes consist of a small (40S) and a large (60S) subunit. The 40S small subunit contains 1 molecule of ribosomal RNA (18S rRNA) and 33 different proteins (encoded by 57 genes). The large 60S subunit contains 3 rRNA molecules (25S, 5.8S and 5S rRNA) and 46 different proteins (encoded by 81 genes).

Its subcellular location is the cytoplasm. Functionally, component of the ribosome, a large ribonucleoprotein complex responsible for the synthesis of proteins in the cell. The small ribosomal subunit (SSU) binds messenger RNAs (mRNAs) and translates the encoded message by selecting cognate aminoacyl-transfer RNA (tRNA) molecules. The large subunit (LSU) contains the ribosomal catalytic site termed the peptidyl transferase center (PTC), which catalyzes the formation of peptide bonds, thereby polymerizing the amino acids delivered by tRNAs into a polypeptide chain. The nascent polypeptides leave the ribosome through a tunnel in the LSU and interact with protein factors that function in enzymatic processing, targeting, and the membrane insertion of nascent chains at the exit of the ribosomal tunnel. The sequence is that of Large ribosomal subunit protein eL8A from Saccharomyces cerevisiae (strain ATCC 204508 / S288c) (Baker's yeast).